The chain runs to 54 residues: Photosystem II reaction center protein L (54 aa).

A helical transmembrane segment spans residues 33-53 (SLFWGLLLIFVLAVLFSSYIF).

It belongs to the PsbL family. In terms of assembly, PSII is composed of 1 copy each of membrane proteins PsbA, PsbB, PsbC, PsbD, PsbE, PsbF, PsbH, PsbI, PsbJ, PsbK, PsbL, PsbM, PsbT, PsbX, PsbY, PsbZ, Psb30/Ycf12, at least 3 peripheral proteins of the oxygen-evolving complex and a large number of cofactors. It forms dimeric complexes.

Its subcellular location is the plastid. The protein resides in the chloroplast thylakoid membrane. In terms of biological role, one of the components of the core complex of photosystem II (PSII). PSII is a light-driven water:plastoquinone oxidoreductase that uses light energy to abstract electrons from H(2)O, generating O(2) and a proton gradient subsequently used for ATP formation. It consists of a core antenna complex that captures photons, and an electron transfer chain that converts photonic excitation into a charge separation. This subunit is found at the monomer-monomer interface and is required for correct PSII assembly and/or dimerization. This is Photosystem II reaction center protein L from Stigeoclonium helveticum (Green alga).